The sequence spans 235 residues: Ribosomal RNA small subunit methyltransferase G (235 aa).

S-adenosyl-L-methionine contacts are provided by residues Gly-74, Leu-79, 124-125 (AE), and Arg-142. The disordered stretch occupies residues 211–235 (RRRAAKPGRNKSGRTARSRGRTGRR). Positions 213 to 235 (RAAKPGRNKSGRTARSRGRTGRR) are enriched in basic residues.

It belongs to the methyltransferase superfamily. RNA methyltransferase RsmG family.

It localises to the cytoplasm. Its function is as follows. Specifically methylates the N7 position of guanine in position 518 of 16S rRNA. The polypeptide is Ribosomal RNA small subunit methyltransferase G (Mycolicibacterium smegmatis (strain ATCC 700084 / mc(2)155) (Mycobacterium smegmatis)).